The chain runs to 311 residues: Aspartate carbamoyltransferase catalytic subunit (311 aa).

Carbamoyl phosphate is bound by residues Arg55 and Thr56. An L-aspartate-binding site is contributed by Lys85. Arg106, His135, and Gln138 together coordinate carbamoyl phosphate. Positions 168 and 230 each coordinate L-aspartate. Carbamoyl phosphate-binding residues include Leu268 and Pro269.

This sequence belongs to the aspartate/ornithine carbamoyltransferase superfamily. ATCase family. In terms of assembly, heterododecamer (2C3:3R2) of six catalytic PyrB chains organized as two trimers (C3), and six regulatory PyrI chains organized as three dimers (R2).

It catalyses the reaction carbamoyl phosphate + L-aspartate = N-carbamoyl-L-aspartate + phosphate + H(+). It functions in the pathway pyrimidine metabolism; UMP biosynthesis via de novo pathway; (S)-dihydroorotate from bicarbonate: step 2/3. Catalyzes the condensation of carbamoyl phosphate and aspartate to form carbamoyl aspartate and inorganic phosphate, the committed step in the de novo pyrimidine nucleotide biosynthesis pathway. This Citrobacter koseri (strain ATCC BAA-895 / CDC 4225-83 / SGSC4696) protein is Aspartate carbamoyltransferase catalytic subunit.